Reading from the N-terminus, the 293-residue chain is ATP synthase gamma chain (293 aa).

The protein belongs to the ATPase gamma chain family. F-type ATPases have 2 components, CF(1) - the catalytic core - and CF(0) - the membrane proton channel. CF(1) has five subunits: alpha(3), beta(3), gamma(1), delta(1), epsilon(1). CF(0) has three main subunits: a, b and c.

It is found in the cell membrane. Produces ATP from ADP in the presence of a proton gradient across the membrane. The gamma chain is believed to be important in regulating ATPase activity and the flow of protons through the CF(0) complex. The polypeptide is ATP synthase gamma chain (Streptococcus gordonii (strain Challis / ATCC 35105 / BCRC 15272 / CH1 / DL1 / V288)).